The sequence spans 522 residues: tRNA-2-methylthio-N(6)-dimethylallyladenosine synthase (522 aa).

The MTTase N-terminal domain maps to 24–140 (RTYEVKTYGC…LPTLLQRAEH (117 aa)). [4Fe-4S] cluster-binding residues include Cys-33, Cys-69, Cys-103, Cys-177, Cys-181, and Cys-184. The Radical SAM core domain occupies 163 to 399 (RESAYAGWVS…MVVQEQVCEE (237 aa)). A TRAM domain is found at 402–473 (QKLIGTTVEL…PFFLIADSGV (72 aa)).

This sequence belongs to the methylthiotransferase family. MiaB subfamily. Monomer. The cofactor is [4Fe-4S] cluster.

It localises to the cytoplasm. It carries out the reaction N(6)-dimethylallyladenosine(37) in tRNA + (sulfur carrier)-SH + AH2 + 2 S-adenosyl-L-methionine = 2-methylsulfanyl-N(6)-dimethylallyladenosine(37) in tRNA + (sulfur carrier)-H + 5'-deoxyadenosine + L-methionine + A + S-adenosyl-L-homocysteine + 2 H(+). Its function is as follows. Catalyzes the methylthiolation of N6-(dimethylallyl)adenosine (i(6)A), leading to the formation of 2-methylthio-N6-(dimethylallyl)adenosine (ms(2)i(6)A) at position 37 in tRNAs that read codons beginning with uridine. This chain is tRNA-2-methylthio-N(6)-dimethylallyladenosine synthase, found in Corynebacterium glutamicum (strain ATCC 13032 / DSM 20300 / JCM 1318 / BCRC 11384 / CCUG 27702 / LMG 3730 / NBRC 12168 / NCIMB 10025 / NRRL B-2784 / 534).